The sequence spans 792 residues: Phenylalanine--tRNA ligase beta subunit (792 aa).

One can recognise a tRNA-binding domain in the interval 39–150 (APAFHKVVVA…PDAPVGTDFR (112 aa)). A B5 domain is found at 405–480 (PARDPIRLGL…RMYGYNRIAA (76 aa)). Asp-458, Asp-464, Glu-467, and Glu-468 together coordinate Mg(2+). The region spanning 698 to 791 (SKYPPIRRDI…LENRFGARLR (94 aa)) is the FDX-ACB domain.

Belongs to the phenylalanyl-tRNA synthetase beta subunit family. Type 1 subfamily. As to quaternary structure, tetramer of two alpha and two beta subunits. Requires Mg(2+) as cofactor.

The protein localises to the cytoplasm. The enzyme catalyses tRNA(Phe) + L-phenylalanine + ATP = L-phenylalanyl-tRNA(Phe) + AMP + diphosphate + H(+). This chain is Phenylalanine--tRNA ligase beta subunit, found in Nitrosospira multiformis (strain ATCC 25196 / NCIMB 11849 / C 71).